The following is a 318-amino-acid chain: Beta-ketoacyl-[acyl-carrier-protein] synthase III (318 aa).

Active-site residues include cysteine 113 and histidine 245. The interval 246 to 250 is ACP-binding; that stretch reads QANIR. The active site involves asparagine 275.

It belongs to the thiolase-like superfamily. FabH family. As to quaternary structure, homodimer.

It is found in the cytoplasm. The catalysed reaction is malonyl-[ACP] + acetyl-CoA + H(+) = 3-oxobutanoyl-[ACP] + CO2 + CoA. Its pathway is lipid metabolism; fatty acid biosynthesis. Its function is as follows. Catalyzes the condensation reaction of fatty acid synthesis by the addition to an acyl acceptor of two carbons from malonyl-ACP. Catalyzes the first condensation reaction which initiates fatty acid synthesis and may therefore play a role in governing the total rate of fatty acid production. Possesses both acetoacetyl-ACP synthase and acetyl transacylase activities. Its substrate specificity determines the biosynthesis of branched-chain and/or straight-chain of fatty acids. This chain is Beta-ketoacyl-[acyl-carrier-protein] synthase III, found in Wolbachia pipientis wMel.